The sequence spans 119 residues: MFSLKRQQGASFEHQARLFLESKGLTFIAANQNFKCGELDLIMNDKETIVFVEVRQRSHSAYGSAIESVDWRKQQKWLDAANLWLAKQNMSLEDANCRFDLIAFGKTPQDIQWIPNFLD.

It belongs to the UPF0102 family.

This is UPF0102 protein CGSHiGG_01960 from Haemophilus influenzae (strain PittGG).